The chain runs to 271 residues: Short-chain dehydrogenase ptmH (271 aa).

9 residues coordinate NADP(+): Ile-8, Thr-34, Lys-40, Asp-56, Asn-84, Tyr-148, Lys-152, Val-181, and Thr-183. Residue Tyr-148 is the Proton acceptor of the active site. The active-site Lowers pKa of active site Tyr is the Lys-152.

It belongs to the short-chain dehydrogenases/reductases (SDR) family.

The protein operates within secondary metabolite biosynthesis. Its function is as follows. Short-chain dehydrogenase; part of the gene cluster that mediates the biosynthesis of the indole diterpenes penitrems. The geranylgeranyl diphosphate (GGPP) synthase ptmG catalyzes the first step in penitrem biosynthesis via conversion of farnesyl pyrophosphate and isopentyl pyrophosphate into geranylgeranyl pyrophosphate (GGPP). Condensation of indole-3-glycerol phosphate with GGPP by the prenyl transferase ptmC then forms 3-geranylgeranylindole (3-GGI). Epoxidation by the FAD-dependent monooxygenase ptmM leads to a epoxidized-GGI that is substrate of the terpene cyclase ptmB for cyclization to yield paspaline. Paspaline is subsequently converted to 13-desoxypaxilline by the cytochrome P450 monooxygenase ptmP, the latter being then converted to paxilline by the cytochrome P450 monooxygenase ptmQ. Paxilline is converted to beta-paxitriol via C-10 ketoreduction by the short-chain dehydrogenase ptmH which can be monoprenylated at the C-20 by the indole diterpene prenyltransferase ptmD. A two-step elimination (acetylation and elimination) process performed by the O-acetyltransferase ptmV and ptmI leads to the production of the prenylated form of penijanthine. The FAD-linked oxidoreductase ptmO then converts the prenylated form of penijanthine into PC-M5 which is in turn transformed into PC-M4 by the aromatic dimethylallyltransferase ptmE. Five sequential oxidative transformations performed by the cytochrome P450 monooxygenases ptmK, ptmU, ptmL, ptmN and ptmJ yield the various penitrem compounds. PtmK, ptmU and ptmM are involved in the formation of the key bicyclic ring of penitrem C via the formation of the intermediates secopenitrem D and penitrem D. PtmL catalyzes the epoxidation of penitrem D and C to yield penitrem B and F, respectively. PtmJ catalyzes the last benzylic hydroxylation to convert penitrem B to prenitrem E and penitrem F to penitrem A. This is Short-chain dehydrogenase ptmH from Penicillium ochrochloron.